Here is a 311-residue protein sequence, read N- to C-terminus: Probable flavin reductase (311 aa).

FMN contacts are provided by residues 38–41 (TANS), 55–61 (CLAKSSR), 88–89 (FA), and arginine 95.

Belongs to the non-flavoprotein flavin reductase family.

This Rhizobium meliloti (strain 1021) (Ensifer meliloti) protein is Probable flavin reductase.